The sequence spans 329 residues: Phenylalanine--tRNA ligase alpha subunit (329 aa).

Glu-253 contributes to the Mg(2+) binding site.

It belongs to the class-II aminoacyl-tRNA synthetase family. Phe-tRNA synthetase alpha subunit type 1 subfamily. In terms of assembly, tetramer of two alpha and two beta subunits. Mg(2+) is required as a cofactor.

It is found in the cytoplasm. The enzyme catalyses tRNA(Phe) + L-phenylalanine + ATP = L-phenylalanyl-tRNA(Phe) + AMP + diphosphate + H(+). The chain is Phenylalanine--tRNA ligase alpha subunit from Teredinibacter turnerae (strain ATCC 39867 / T7901).